The sequence spans 158 residues: Ribosome maturation factor RimP (158 aa).

It belongs to the RimP family.

The protein localises to the cytoplasm. Its function is as follows. Required for maturation of 30S ribosomal subunits. The sequence is that of Ribosome maturation factor RimP from Streptococcus suis (strain 05ZYH33).